The following is a 122-amino-acid chain: Large ribosomal subunit protein eL22B (122 aa).

This sequence belongs to the eukaryotic ribosomal protein eL22 family. As to quaternary structure, component of the large ribosomal subunit (LSU). Mature yeast ribosomes consist of a small (40S) and a large (60S) subunit. The 40S small subunit contains 1 molecule of ribosomal RNA (18S rRNA) and 33 different proteins (encoded by 57 genes). The large 60S subunit contains 3 rRNA molecules (25S, 5.8S and 5S rRNA) and 46 different proteins (encoded by 81 genes).

It localises to the cytoplasm. Component of the ribosome, a large ribonucleoprotein complex responsible for the synthesis of proteins in the cell. The small ribosomal subunit (SSU) binds messenger RNAs (mRNAs) and translates the encoded message by selecting cognate aminoacyl-transfer RNA (tRNA) molecules. The large subunit (LSU) contains the ribosomal catalytic site termed the peptidyl transferase center (PTC), which catalyzes the formation of peptide bonds, thereby polymerizing the amino acids delivered by tRNAs into a polypeptide chain. The nascent polypeptides leave the ribosome through a tunnel in the LSU and interact with protein factors that function in enzymatic processing, targeting, and the membrane insertion of nascent chains at the exit of the ribosomal tunnel. The protein is Large ribosomal subunit protein eL22B of Saccharomyces cerevisiae (strain ATCC 204508 / S288c) (Baker's yeast).